The chain runs to 418 residues: Thyroid hormone receptor alpha-A (418 aa).

The disordered stretch occupies residues 1 to 38; sequence MDQNLSGLDCLSEPDEKRWPDGKRKRKNSQCMGKSGMS. The segment at 1 to 60 is modulating; the sequence is MDQNLSGLDCLSEPDEKRWPDGKRKRKNSQCMGKSGMSGDSLVSLPSAGYIPSYLDKDEP. 2 consecutive NR C4-type zinc fingers follow at residues 61–81 and 99–123; these read CVVCSDKATGYHYRCITCEGC and CKYDGCCIIDKITRNQCQLCRFKKC. The nuclear receptor DNA-binding region spans 61–135; it reads CVVCSDKATG…VGMAMDLVLD (75 aa). The 245-residue stretch at 171–415 folds into the NR LBD domain; sequence EEWELIRIVT…PPLFLEVFED (245 aa).

This sequence belongs to the nuclear hormone receptor family. NR1 subfamily. As to quaternary structure, binds to thyroid hormone receptor element (TRE) weakly as homodimers and monomers, but binds TRE with much higher affinity as heterodimers with retinoid X receptors. Can bind DNA as a heterodimer with either rxra or rxrg.

It localises to the nucleus. Functionally, high affinity receptor for triiodothyronine (T3). In Xenopus laevis (African clawed frog), this protein is Thyroid hormone receptor alpha-A (thra-a).